Consider the following 130-residue polypeptide: Ribonuclease P protein component (130 aa).

This sequence belongs to the RnpA family. As to quaternary structure, consists of a catalytic RNA component (M1 or rnpB) and a protein subunit.

It catalyses the reaction Endonucleolytic cleavage of RNA, removing 5'-extranucleotides from tRNA precursor.. Its function is as follows. RNaseP catalyzes the removal of the 5'-leader sequence from pre-tRNA to produce the mature 5'-terminus. It can also cleave other RNA substrates such as 4.5S RNA. The protein component plays an auxiliary but essential role in vivo by binding to the 5'-leader sequence and broadening the substrate specificity of the ribozyme. The protein is Ribonuclease P protein component of Azotobacter vinelandii (strain DJ / ATCC BAA-1303).